The sequence spans 231 residues: NADH-ubiquinone oxidoreductase chain 4 (231 aa).

6 consecutive transmembrane segments (helical) span residues Pro-1–Ile-21, Met-34–Leu-54, Ile-63–Gly-85, Ala-89–Tyr-111, Ile-128–Pro-148, and Thr-169–Leu-189.

Belongs to the complex I subunit 4 family.

It is found in the mitochondrion membrane. The catalysed reaction is a ubiquinone + NADH + 5 H(+)(in) = a ubiquinol + NAD(+) + 4 H(+)(out). Core subunit of the mitochondrial membrane respiratory chain NADH dehydrogenase (Complex I) that is believed to belong to the minimal assembly required for catalysis. Complex I functions in the transfer of electrons from NADH to the respiratory chain. The immediate electron acceptor for the enzyme is believed to be ubiquinone. In Bothrocophias hyoprora (Amazonian hognose viper), this protein is NADH-ubiquinone oxidoreductase chain 4 (MT-ND4).